The following is an 837-amino-acid chain: Protein translocase subunit SecA (837 aa).

Residues Q85, 103–107 (GEGKT), and D493 each bind ATP. Zn(2+)-binding residues include C821, C823, C832, and H833.

It belongs to the SecA family. As to quaternary structure, monomer and homodimer. Part of the essential Sec protein translocation apparatus which comprises SecA, SecYEG and auxiliary proteins SecDF. Other proteins may also be involved. The cofactor is Zn(2+).

It localises to the cell membrane. It is found in the cytoplasm. The catalysed reaction is ATP + H2O + cellular proteinSide 1 = ADP + phosphate + cellular proteinSide 2.. In terms of biological role, part of the Sec protein translocase complex. Interacts with the SecYEG preprotein conducting channel. Has a central role in coupling the hydrolysis of ATP to the transfer of proteins into and across the cell membrane, serving as an ATP-driven molecular motor driving the stepwise translocation of polypeptide chains across the membrane. This Streptococcus pneumoniae serotype 19F (strain G54) protein is Protein translocase subunit SecA.